The sequence spans 620 residues: Probable potassium transport system protein Kup (620 aa).

The next 12 helical transmembrane spans lie at 11-31, 51-71, 100-120, 138-158, 167-187, 202-222, 246-266, 288-308, 334-354, 364-384, 396-416, and 418-438; these read LAFL…LYAF, ILSL…LLLV, IAML…VITP, LAPY…AVQA, FFAP…AHAI, AVHF…LVVL, WFAL…AYLL, LILL…SGIF, GQIY…FVML, AAYG…LVLV, VVTI…STST, and LMEG…VMYI.

It belongs to the HAK/KUP transporter (TC 2.A.72) family.

Its subcellular location is the cell inner membrane. It catalyses the reaction K(+)(in) + H(+)(in) = K(+)(out) + H(+)(out). In terms of biological role, transport of potassium into the cell. Likely operates as a K(+):H(+) symporter. The protein is Probable potassium transport system protein Kup of Vibrio cholerae serotype O1 (strain ATCC 39315 / El Tor Inaba N16961).